Consider the following 583-residue polypeptide: MSVIRPSPIPIPRCRSQVLHRRLYSIQLIQRRRRRWNPRSEVEDTAIESTARSPEAAGGKMVVELVGAFNEVTERMNSVWLSTSSSRLLFKALKLSIPILQSLPLASDGRSPLSKALSLSIILADLQMDAEVISASILSEVVDANAISIYEVRDHIGTGTAHLLHEIFRVKNIPFKVDVLDDETAASLRKFYLTYYDIRAVIMDLVSKLDEMRHLDHLPRYRQQILSLEVLKIYSPLAHAVGANHLSLELEDISFRYLFPCSYIYLDSWLRGHENGSKPLIDVYKEQLHRSLKDDLVLAEMVNDVYIKGRYKSRYSMMKKLLRDGRKPEEVNDVLGLRVILMPNSVVNDVEVGEKACYRTSEIIRSLWKEIPHRTKDYIARPKENGYRSLHMAVDVSDSDQIRPLMEIQIRTMDMDGSANAGTASHSLYKGGLTDPKEAKRLKAIMLAAADLAAIRLKDISSNKHQSFKTTTNQRDRVFCLLDKNGDGMISIEELMEVMEELGAPGEDAEEMMQLLDSNSDGSLSSDEFDTFQKQVEFMRKWEDRDNEYKSLLDEKLHDLPHQDTTGLIQLYNKELEDRLSTH.

The transit peptide at 1–58 (MSVIRPSPIPIPRCRSQVLHRRLYSIQLIQRRRRRWNPRSEVEDTAIESTARSPEAAG) directs the protein to the chloroplast. Residues 112 to 212 (PLSKALSLSI…MDLVSKLDEM (101 aa)) form the HD domain. 2 consecutive EF-hand domains span residues 470-505 (TTTN…LGAP) and 507-539 (EDAE…VEFM). Residues Asp-483, Asn-485, Asp-487, Met-489, Glu-494, Asp-517, Asn-519, Asp-521, Ser-523, and Glu-528 each contribute to the Ca(2+) site.

It belongs to the RelA/SpoT family. As to expression, expressed in shoots, cotyledons, rosette and cauline leaves, stems, sepals, pistils and siliques.

It is found in the plastid. The protein resides in the chloroplast. The catalysed reaction is GTP + ATP = guanosine 3'-diphosphate 5'-triphosphate + AMP. Its activity is regulated as follows. Activated by calcium. Its function is as follows. Possesses calcium-dependent ppGpp (guanosine 3'-diphosphate 5'-diphosphate) synthetase activity in vitro and is able to functionally complement E.coli relA mutants. Plays an important role in the timing adjustment of pistil and pollen maturation required for successful pollination. May be involved in a rapid plant ppGpp-mediated response to pathogens and other stresses. The polypeptide is Probable GTP diphosphokinase CRSH, chloroplastic (CRSH) (Arabidopsis thaliana (Mouse-ear cress)).